Consider the following 336-residue polypeptide: Ketol-acid reductoisomerase (NADP(+)) (336 aa).

The 181-residue stretch at 5–185 (SKIYTDKDSN…GATRAGVIPT (181 aa)) folds into the KARI N-terminal Rossmann domain. Residues 28 to 31 (YGSQ), S56, and 86 to 89 (DMVQ) each bind NADP(+). Residue H111 is part of the active site. G137 is a binding site for NADP(+). The KARI C-terminal knotted domain maps to 186–331 (TFKEETETDL…NQLKDLIQKG (146 aa)). Mg(2+)-binding residues include D194, E198, E230, and E234. S255 lines the substrate pocket.

This sequence belongs to the ketol-acid reductoisomerase family. Mg(2+) is required as a cofactor.

It carries out the reaction (2R)-2,3-dihydroxy-3-methylbutanoate + NADP(+) = (2S)-2-acetolactate + NADPH + H(+). The catalysed reaction is (2R,3R)-2,3-dihydroxy-3-methylpentanoate + NADP(+) = (S)-2-ethyl-2-hydroxy-3-oxobutanoate + NADPH + H(+). It participates in amino-acid biosynthesis; L-isoleucine biosynthesis; L-isoleucine from 2-oxobutanoate: step 2/4. The protein operates within amino-acid biosynthesis; L-valine biosynthesis; L-valine from pyruvate: step 2/4. Functionally, involved in the biosynthesis of branched-chain amino acids (BCAA). Catalyzes an alkyl-migration followed by a ketol-acid reduction of (S)-2-acetolactate (S2AL) to yield (R)-2,3-dihydroxy-isovalerate. In the isomerase reaction, S2AL is rearranged via a Mg-dependent methyl migration to produce 3-hydroxy-3-methyl-2-ketobutyrate (HMKB). In the reductase reaction, this 2-ketoacid undergoes a metal-dependent reduction by NADPH to yield (R)-2,3-dihydroxy-isovalerate. This Saccharolobus islandicus (strain Y.N.15.51 / Yellowstone #2) (Sulfolobus islandicus) protein is Ketol-acid reductoisomerase (NADP(+)).